Here is a 357-residue protein sequence, read N- to C-terminus: Peptide chain release factor 1 (357 aa).

Gln-234 bears the N5-methylglutamine mark. The disordered stretch occupies residues 283–313; that stretch reads SKKQEQRSSNRKQQVGSGDRSERIRTYNFPQ.

The protein belongs to the prokaryotic/mitochondrial release factor family. In terms of processing, methylated by PrmC. Methylation increases the termination efficiency of RF1.

It localises to the cytoplasm. Peptide chain release factor 1 directs the termination of translation in response to the peptide chain termination codons UAG and UAA. In Borreliella burgdorferi (strain ATCC 35210 / DSM 4680 / CIP 102532 / B31) (Borrelia burgdorferi), this protein is Peptide chain release factor 1 (prfA).